A 179-amino-acid polypeptide reads, in one-letter code: tRNA (cytidine(56)-2'-O)-methyltransferase (179 aa).

S-adenosyl-L-methionine-binding positions include Leu82, 110-114 (GAEKV), and 128-135 (VGNQPHSE).

This sequence belongs to the aTrm56 family. Homodimer.

Its subcellular location is the cytoplasm. It carries out the reaction cytidine(56) in tRNA + S-adenosyl-L-methionine = 2'-O-methylcytidine(56) in tRNA + S-adenosyl-L-homocysteine + H(+). Specifically catalyzes the AdoMet-dependent 2'-O-ribose methylation of cytidine at position 56 in tRNAs. This Methanocaldococcus jannaschii (strain ATCC 43067 / DSM 2661 / JAL-1 / JCM 10045 / NBRC 100440) (Methanococcus jannaschii) protein is tRNA (cytidine(56)-2'-O)-methyltransferase.